We begin with the raw amino-acid sequence, 631 residues long: tRNA uridine 5-carboxymethylaminomethyl modification enzyme MnmG (631 aa).

Residues 15–20 (GGGHAG), Val-127, and Ser-182 contribute to the FAD site. 275 to 289 (GPRYCPSIEDKIVRF) contacts NAD(+). Residue Gln-372 participates in FAD binding.

The protein belongs to the MnmG family. In terms of assembly, homodimer. Heterotetramer of two MnmE and two MnmG subunits. FAD serves as cofactor.

It is found in the cytoplasm. Its function is as follows. NAD-binding protein involved in the addition of a carboxymethylaminomethyl (cmnm) group at the wobble position (U34) of certain tRNAs, forming tRNA-cmnm(5)s(2)U34. This Buchnera aphidicola subsp. Schizaphis graminum (strain Sg) protein is tRNA uridine 5-carboxymethylaminomethyl modification enzyme MnmG.